Consider the following 475-residue polypeptide: tRNA modification GTPase MnmE (475 aa).

Arg24, Glu81, and Lys124 together coordinate (6S)-5-formyl-5,6,7,8-tetrahydrofolate. A TrmE-type G domain is found at 220-397 (GLSVVLAGQP…MRSELLRLIG (178 aa)). K(+) is bound at residue Asn230. GTP-binding positions include 230–235 (NVGKSS), 249–255 (TPIAGTT), 274–277 (DTAG), and 378–380 (SAR). Ser234 provides a ligand contact to Mg(2+). K(+) contacts are provided by Thr249, Ile251, and Thr254. Position 255 (Thr255) interacts with Mg(2+). Lys475 contributes to the (6S)-5-formyl-5,6,7,8-tetrahydrofolate binding site.

This sequence belongs to the TRAFAC class TrmE-Era-EngA-EngB-Septin-like GTPase superfamily. TrmE GTPase family. In terms of assembly, homodimer. Heterotetramer of two MnmE and two MnmG subunits. K(+) is required as a cofactor.

The protein resides in the cytoplasm. Exhibits a very high intrinsic GTPase hydrolysis rate. Involved in the addition of a carboxymethylaminomethyl (cmnm) group at the wobble position (U34) of certain tRNAs, forming tRNA-cmnm(5)s(2)U34. In Cupriavidus metallidurans (strain ATCC 43123 / DSM 2839 / NBRC 102507 / CH34) (Ralstonia metallidurans), this protein is tRNA modification GTPase MnmE.